The chain runs to 478 residues: Stromelysin-1 (478 aa).

The N-terminal stretch at 1–17 is a signal peptide; it reads MKTLPTLLLLCVALCSA. The propeptide at 18 to 100 is activation peptide; sequence YPLDGASRDA…PRCGVPDVGH (83 aa). The Cysteine switch signature appears at 91 to 98; that stretch reads PRCGVPDV. A Zn(2+)-binding site is contributed by cysteine 93. Ca(2+) is bound by residues aspartate 125 and aspartate 159. The Zn(2+) site is built by histidine 169 and aspartate 171. Residues aspartate 176, glycine 177, glycine 179, and valine 181 each coordinate Ca(2+). Position 184 (histidine 184) interacts with Zn(2+). 3 residues coordinate Ca(2+): glycine 191, asparagine 193, and aspartate 195. Zn(2+) is bound at residue histidine 197. Residues aspartate 199, aspartate 200, and glutamate 202 each contribute to the Ca(2+) site. Histidine 219 serves as a coordination point for Zn(2+). Glutamate 220 is an active-site residue. Zn(2+) contacts are provided by histidine 223 and histidine 229. Hemopexin repeat units lie at residues 288–337, 338–384, 386–434, and 435–478; these read PVMC…WPSL, PSAV…GFPS, IRKI…FPGI, and NPKI…WFQC. Cysteine 291 and cysteine 478 are oxidised to a cystine. A Ca(2+)-binding site is contributed by aspartate 298. Positions 390 and 439 each coordinate Ca(2+).

The protein belongs to the peptidase M10A family. Ca(2+) serves as cofactor. It depends on Zn(2+) as a cofactor.

The protein localises to the secreted. It localises to the extracellular space. The protein resides in the extracellular matrix. The enzyme catalyses Preferential cleavage where P1', P2' and P3' are hydrophobic residues.. In terms of biological role, metalloproteinase with a rather broad substrate specificity that can degrade fibronectin, laminin, gelatins of type I, III, IV, and V; collagens III, IV, X, and IX, and cartilage proteoglycans. Activates different molecules including growth factors, plasminogen or other matrix metalloproteinases such as MMP9. Once released into the extracellular matrix (ECM), the inactive pro-enzyme is activated by the plasmin cascade signaling pathway. Also acts intracellularly. For example, in dopaminergic neurons, gets activated by the serine protease HTRA2 upon stress and plays a pivotal role in DA neuronal degeneration by mediating microglial activation and alpha-synuclein/SNCA cleavage. In addition, plays a role in immune response and possesses antiviral activity against various viruses. Mechanistically, translocates from the cytoplasm into the cell nucleus upon virus infection to influence NF-kappa-B activities. This chain is Stromelysin-1 (MMP3), found in Oryctolagus cuniculus (Rabbit).